A 328-amino-acid polypeptide reads, in one-letter code: DNA repair protein RAD51 homolog 4 (328 aa).

The segment at 1–83 (MGVLRVGLCP…ELKTSTAILS (83 aa)) is preferentially binds ssDNA. ATP is bound at residue 107–114 (GGPGSGKT).

It belongs to the RecA family. RAD51 subfamily. As to quaternary structure, part of the BCDX2 complex consisting of RAD51B, RAD51C, RAD51D and XRCC2; the complex has a ring-like structure arranged into a flat disc around a central channel. In the absence of DNA, the BCDX2 subcomplex XRCC2:RAD51D formed a multimeric ring structure; in the presence of single-stranded DNA it formed a filamentous structure with the ssDNA. Interacts with SWSAP1 and ZSWIM7; involved in homologous recombination repair. Interacts with BLM; required for stimulation of BLM activity by the BCDX2 subcomplex XRCC2:RAD51D. Expressed in colon, prostate, spleen, testis, ovary, thymus and small intestine. Weakly expressed in leukocytes.

It is found in the nucleus. Its subcellular location is the cytoplasm. The protein localises to the cytoskeleton. It localises to the microtubule organizing center. The protein resides in the centrosome. It is found in the chromosome. Its subcellular location is the telomere. In terms of biological role, involved in the homologous recombination repair (HRR) pathway of double-stranded DNA breaks arising during DNA replication or induced by DNA-damaging agents. Bind to single-stranded DNA (ssDNA) and has DNA-dependent ATPase activity. Part of the RAD51 paralog protein complex BCDX2 which acts in the BRCA1-BRCA2-dependent HR pathway. Upon DNA damage, BCDX2 acts downstream of BRCA2 recruitment and upstream of RAD51 recruitment. BCDX2 binds predominantly to the intersection of the four duplex arms of the Holliday junction and to junction of replication forks. The BCDX2 complex was originally reported to bind single-stranded DNA, single-stranded gaps in duplex DNA and specifically to nicks in duplex DNA. Involved in telomere maintenance. The BCDX2 subcomplex XRCC2:RAD51D can stimulate Holliday junction resolution by BLM. The protein is DNA repair protein RAD51 homolog 4 (RAD51D) of Homo sapiens (Human).